A 246-amino-acid chain; its full sequence is 4'-phosphopantetheinyl transferase Svp (246 aa).

The span at 223-232 (AGTAEESAEG) shows a compositional bias: low complexity. A disordered region spans residues 223–246 (AGTAEESAEGAGKEATADDRTAVP). A compositionally biased stretch (basic and acidic residues) spans 233–246 (AGKEATADDRTAVP).

It belongs to the P-Pant transferase superfamily. Gsp/Sfp/HetI/AcpT family.

The enzyme catalyses apo-[ACP] + CoA = holo-[ACP] + adenosine 3',5'-bisphosphate + H(+). Functionally, transfers the 4'-phosphopantetheine moiety from coenzyme A to a Ser of an acyl-carrier-protein. The enzyme is able to transfer the cofactor to a broad range of enzymes with acyl- or peptidyl-carrier protein domains. This chain is 4'-phosphopantetheinyl transferase Svp (svp), found in Streptomyces mobaraensis (Streptoverticillium mobaraense).